A 298-amino-acid polypeptide reads, in one-letter code: Putative olfactory receptor 10D4 (298 aa).

Residues 1–23 are Extracellular-facing; that stretch reads MRNHTMVTEFILLGIPETEGLET. Residue N3 is glycosylated (N-linked (GlcNAc...) asparagine). Residues 24 to 44 traverse the membrane as a helical segment; that stretch reads ALLFLFSSFYLCTLLGNVLIL. Residues 45 to 52 lie on the Cytoplasmic side of the membrane; the sequence is TAIISSTR. The helical transmembrane segment at 53–73 threads the bilayer; it reads LHTPMYFFLGNLSIFDLGFSS. Residues 74–97 lie on the Extracellular side of the membrane; the sequence is TTVPKMLFYLSGNSHAISYAGCVS. A disulfide bridge connects residues C95 and C187. A helical membrane pass occupies residues 98–118; that stretch reads QLFFYHFLGCTECFLYTVMAC. Residues 119–137 lie on the Cytoplasmic side of the membrane; that stretch reads DRFVAICFPLRYTVIMNHR. The chain crosses the membrane as a helical span at residues 138–158; it reads VCFMLATGTWMIGCVHAMILT. Topologically, residues 159-195 are extracellular; sequence PLTFQLPYCGPNKVGYYFCDIPAVLPLACKDTSLAQR. A helical membrane pass occupies residues 196-215; that stretch reads VGFTNVGLLSLICFFLILVS. Topologically, residues 216 to 235 are cytoplasmic; sequence YTCIGISISKIRSAEGRQRA. A helical transmembrane segment spans residues 236–256; sequence FSTCSAHLTAILCAYGPVIVI. The Extracellular segment spans residues 257-267; it reads YLQPNPSALLG. The helical transmembrane segment at 268–288 threads the bilayer; the sequence is SIIQILNNLVTPMLNPLIYSL. At 289 to 298 the chain is on the cytoplasmic side; sequence RNKDVKSDQP.

The protein belongs to the G-protein coupled receptor 1 family.

The protein localises to the cell membrane. Functionally, odorant receptor. The chain is Putative olfactory receptor 10D4 (OR10D4P) from Homo sapiens (Human).